Consider the following 210-residue polypeptide: Thymidylate kinase (210 aa).

ATP is bound at residue 10–17 (GPEGAGKS).

The protein belongs to the thymidylate kinase family.

The catalysed reaction is dTMP + ATP = dTDP + ADP. Its function is as follows. Phosphorylation of dTMP to form dTDP in both de novo and salvage pathways of dTTP synthesis. This Pseudomonas syringae pv. tomato (strain ATCC BAA-871 / DC3000) protein is Thymidylate kinase.